The chain runs to 474 residues: ATP synthase subunit beta (474 aa).

152 to 159 (GGAGVGKT) lines the ATP pocket.

It belongs to the ATPase alpha/beta chains family. F-type ATPases have 2 components, CF(1) - the catalytic core - and CF(0) - the membrane proton channel. CF(1) has five subunits: alpha(3), beta(3), gamma(1), delta(1), epsilon(1). CF(0) has four main subunits: a(1), b(1), b'(1) and c(9-12).

The protein resides in the cell inner membrane. It catalyses the reaction ATP + H2O + 4 H(+)(in) = ADP + phosphate + 5 H(+)(out). Functionally, produces ATP from ADP in the presence of a proton gradient across the membrane. The catalytic sites are hosted primarily by the beta subunits. This chain is ATP synthase subunit beta, found in Rhodospirillum rubrum (strain ATCC 11170 / ATH 1.1.1 / DSM 467 / LMG 4362 / NCIMB 8255 / S1).